Reading from the N-terminus, the 160-residue chain is Cyclic pyranopterin monophosphate synthase (160 aa).

Substrate contacts are provided by residues 74–76 (LSH) and 112–113 (ME). Residue Asp127 is part of the active site.

It belongs to the MoaC family. As to quaternary structure, homohexamer; trimer of dimers.

The enzyme catalyses (8S)-3',8-cyclo-7,8-dihydroguanosine 5'-triphosphate = cyclic pyranopterin phosphate + diphosphate. The protein operates within cofactor biosynthesis; molybdopterin biosynthesis. Functionally, catalyzes the conversion of (8S)-3',8-cyclo-7,8-dihydroguanosine 5'-triphosphate to cyclic pyranopterin monophosphate (cPMP). The sequence is that of Cyclic pyranopterin monophosphate synthase from Trichlorobacter lovleyi (strain ATCC BAA-1151 / DSM 17278 / SZ) (Geobacter lovleyi).